We begin with the raw amino-acid sequence, 227 residues long: Killer cell lectin-like receptor subfamily B member 1A (227 aa).

Residues 1-45 (MDTARVYFGLKPPRTPGAWHESPPSLPPDACRCPRSHRLALKLSC) lie on the Cytoplasmic side of the membrane. The LCK-binding motif motif lies at 31 to 34 (CRCP). A helical; Signal-anchor for type II membrane protein membrane pass occupies residues 46–66 (AGLILLVVTLIGMSVLVRVLI). At 67–227 (QKPSIEKCYV…TLSNYVGYGH (161 aa)) the chain is on the extracellular side. Residues 93–212 (ECPQDWLSHR…NSDNRWICQK (120 aa)) enclose the C-type lectin domain. 3 disulfide bridges follow: cysteine 94/cysteine 105, cysteine 122/cysteine 210, and cysteine 189/cysteine 202.

Homodimer; disulfide-linked. Interacts with tyrosine kinase LCK. In terms of tissue distribution, expressed in natural killer cells.

The protein resides in the membrane. Its function is as follows. Plays a stimulatory role on natural killer (NK) cell cytotoxicity. The polypeptide is Killer cell lectin-like receptor subfamily B member 1A (Klrb1a) (Mus musculus (Mouse)).